The following is a 218-amino-acid chain: Glutathione S-transferase PM239X14 (218 aa).

One can recognise a GST N-terminal domain in the interval 2–85; sequence VTVKLYGMAY…YLVAKYGKGS (84 aa). Glutathione-binding positions include 12–13, 41–42, 55–56, and 69–70; these read ST, HK, VI, and ES. The GST C-terminal domain maps to 93–218; it reads DPKAYGLFEQ…LLRNSSKEFM (126 aa).

This sequence belongs to the GST superfamily. Phi family. In terms of tissue distribution, expressed in vegetative rosettes.

The protein resides in the cytoplasm. It localises to the cytosol. The catalysed reaction is RX + glutathione = an S-substituted glutathione + a halide anion + H(+). Specifically catalyzes the conjugation of synthetic 1-chloro-2,4-ditrobenzene to GSH. Also functions as a glutathione peroxidase, converting linoleate oxidation products into their corresponding hydroxyacids. This enzyme may thus serve to protect the cell from oxygen toxicity as well as from exogenous toxins such as herbicides. The sequence is that of Glutathione S-transferase PM239X14 from Arabidopsis thaliana (Mouse-ear cress).